The following is a 406-amino-acid chain: COP9 signalosome complex subunit 4 (406 aa).

In terms of domain architecture, PCI spans 197–366; it reads YRRKFIEAAQ…GIVHFETREP (170 aa).

It belongs to the CSN4 family. Component of the CSN complex, probably composed of cops1, cops2, cops3, cops4, cops5, cops6, cops7, cops8 and cops9.

The protein localises to the cytoplasm. It localises to the nucleus. It is found in the cytoplasmic vesicle. The protein resides in the secretory vesicle. Its subcellular location is the synaptic vesicle. Component of the COP9 signalosome complex (CSN), a complex involved in various cellular and developmental processes. The CSN complex is an essential regulator of the ubiquitin (Ubl) conjugation pathway by mediating the deneddylation of the cullin subunits of E3 ligase complexes, leading to modify the Ubl ligase activity. The sequence is that of COP9 signalosome complex subunit 4 (cops4) from Danio rerio (Zebrafish).